Consider the following 321-residue polypeptide: Malate dehydrogenase (321 aa).

Residues 13-18 and Asp38 each bind NAD(+); that span reads GAGNIG. Residues Arg87 and Arg93 each coordinate substrate. NAD(+)-binding positions include Asn100 and 123-125; that span reads VTN. Residues Asn125 and Arg156 each coordinate substrate. The Proton acceptor role is filled by His180.

This sequence belongs to the LDH/MDH superfamily. MDH type 3 family.

The enzyme catalyses (S)-malate + NAD(+) = oxaloacetate + NADH + H(+). Catalyzes the reversible oxidation of malate to oxaloacetate. This is Malate dehydrogenase from Anaplasma phagocytophilum (strain HZ).